A 234-amino-acid polypeptide reads, in one-letter code: MTENFILGRNNKLEHELKALADYINIPYSILQPYQSECFVRHYTKGQVIYFSPQESSNIYFLIEGNIIREHYNQNGDVYRYFNKEQVLFPISNLFHPKEVNELCTALTDCTVLGLPRELMAFLCKANDDIFLTLFALINDNEQQHMNYNMALTSKFAKDRIIKLLCHLCQTVGYDQDEFYEIKQFLTIQLMSDMAGISRETAGHIIHELKDEKLVVKDHKNWLVSKHLFNDVCV.

An a nucleoside 3',5'-cyclic phosphate-binding site is contributed by 40 to 129 (VRHYTKGQVI…MAFLCKANDD (90 aa)). An HTH crp-type domain is found at 155–228 (KFAKDRIIKL…HKNWLVSKHL (74 aa)). The segment at residues 188–207 (IQLMSDMAGISRETAGHIIH) is a DNA-binding region (H-T-H motif).

The protein localises to the cytoplasm. In terms of biological role, positively regulates the expression of the arcABDCR operon under anaerobic conditions, thus playing an essential role in arginine catabolism. May also control the expression of genes encoding proteins which are involved in anaerobic metabolism. Can bind cyclic AMP. The chain is HTH-type transcriptional regulator ArcR (arcR) from Staphylococcus aureus (strain Mu50 / ATCC 700699).